The sequence spans 403 residues: Soluble calcium-activated nucleotidase 1 (403 aa).

Residues 1–44 (MPIQPFDQREWNEPMHSLRISVGGLPVLASMTKATDPRFRPRWR) lie on the Cytoplasmic side of the membrane. The helical; Signal-anchor for type II membrane protein transmembrane segment at 45–61 (VILTSFVGAALLWLLYS) threads the bilayer. The Lumenal portion of the chain corresponds to 62-403 (HHQGPVPGRP…TVKYEGIEFI (342 aa)). N-linked (GlcNAc...) asparagine glycosylation occurs at Asn90. The Ca(2+) site is built by Ser170, Asp171, Glu217, Glu286, Ser347, and Glu398.

Belongs to the apyrase family. In terms of assembly, monomer. Homodimer; dimerization is Ca(2+)-dependent. It depends on Ca(2+) as a cofactor.

It is found in the endoplasmic reticulum membrane. Its subcellular location is the golgi apparatus. The protein resides in the golgi stack membrane. The enzyme catalyses a ribonucleoside 5'-diphosphate + H2O = a ribonucleoside 5'-phosphate + phosphate + H(+). Calcium-dependent nucleotidase with a preference for UDP. The order of activity with different substrates is UDP &gt; GDP &gt; IDP &gt;&gt; UTP &gt; CDP = GTP = ITP. Has very low activity towards ADP and even lower activity towards ATP. Does not hydrolyze AMP and GMP. Involved in proteoglycan synthesis. This chain is Soluble calcium-activated nucleotidase 1 (Cant1), found in Mus musculus (Mouse).